We begin with the raw amino-acid sequence, 144 residues long: Large ribosomal subunit protein uL16 (144 aa).

The protein belongs to the universal ribosomal protein uL16 family. Part of the 50S ribosomal subunit.

Its function is as follows. Binds 23S rRNA and is also seen to make contacts with the A and possibly P site tRNAs. The sequence is that of Large ribosomal subunit protein uL16 from Levilactobacillus brevis (strain ATCC 367 / BCRC 12310 / CIP 105137 / JCM 1170 / LMG 11437 / NCIMB 947 / NCTC 947) (Lactobacillus brevis).